A 244-amino-acid polypeptide reads, in one-letter code: Maintenance of ploidy protein mob2 (244 aa).

Residues 14 to 45 (NRSKRHQNLSDASSSSGSFSKKSSTSQLVRTG) are disordered. Low complexity predominate over residues 23–39 (SDASSSSGSFSKKSSTS). 2 positions are modified to phosphoserine: Ser46 and Ser48.

This sequence belongs to the MOB1/phocein family. As to quaternary structure, interacts with orb6.

It is found in the cytoplasm. Its subcellular location is the cell cortex. Its function is as follows. Required for coordinating polarized cell growth during interphase with the onset of mitosis. The sequence is that of Maintenance of ploidy protein mob2 (mob2) from Schizosaccharomyces pombe (strain 972 / ATCC 24843) (Fission yeast).